A 429-amino-acid chain; its full sequence is Histidinol dehydrogenase (429 aa).

NAD(+) is bound by residues tyrosine 130, glutamine 191, and asparagine 214. Substrate-binding residues include serine 237, glutamine 259, and histidine 262. Residues glutamine 259 and histidine 262 each contribute to the Zn(2+) site. Catalysis depends on proton acceptor residues glutamate 327 and histidine 328. The substrate site is built by histidine 328, aspartate 361, glutamate 415, and histidine 420. Aspartate 361 lines the Zn(2+) pocket. Residue histidine 420 coordinates Zn(2+).

It belongs to the histidinol dehydrogenase family. Zn(2+) is required as a cofactor.

The catalysed reaction is L-histidinol + 2 NAD(+) + H2O = L-histidine + 2 NADH + 3 H(+). Its pathway is amino-acid biosynthesis; L-histidine biosynthesis; L-histidine from 5-phospho-alpha-D-ribose 1-diphosphate: step 9/9. Catalyzes the sequential NAD-dependent oxidations of L-histidinol to L-histidinaldehyde and then to L-histidine. The sequence is that of Histidinol dehydrogenase from Neisseria gonorrhoeae (strain ATCC 700825 / FA 1090).